Consider the following 87-residue polypeptide: DNA-directed RNA polymerase subunit omega (87 aa).

It belongs to the RNA polymerase subunit omega family. As to quaternary structure, the RNAP catalytic core consists of 2 alpha, 1 beta, 1 beta' and 1 omega subunit. When a sigma factor is associated with the core the holoenzyme is formed, which can initiate transcription.

It catalyses the reaction RNA(n) + a ribonucleoside 5'-triphosphate = RNA(n+1) + diphosphate. Functionally, promotes RNA polymerase assembly. Latches the N- and C-terminal regions of the beta' subunit thereby facilitating its interaction with the beta and alpha subunits. The protein is DNA-directed RNA polymerase subunit omega of Azotobacter vinelandii (strain DJ / ATCC BAA-1303).